A 374-amino-acid chain; its full sequence is N-acetyldiaminopimelate deacetylase (374 aa).

Residue Asp69 is part of the active site. Catalysis depends on Glu128, which acts as the Proton acceptor.

It belongs to the peptidase M20A family. N-acetyldiaminopimelate deacetylase subfamily.

The catalysed reaction is N-acetyl-(2S,6S)-2,6-diaminopimelate + H2O = (2S,6S)-2,6-diaminopimelate + acetate. It functions in the pathway amino-acid biosynthesis; L-lysine biosynthesis via DAP pathway; LL-2,6-diaminopimelate from (S)-tetrahydrodipicolinate (acetylase route): step 3/3. Functionally, catalyzes the conversion of N-acetyl-diaminopimelate to diaminopimelate and acetate. The polypeptide is N-acetyldiaminopimelate deacetylase (Bacillus licheniformis (strain ATCC 14580 / DSM 13 / JCM 2505 / CCUG 7422 / NBRC 12200 / NCIMB 9375 / NCTC 10341 / NRRL NRS-1264 / Gibson 46)).